The following is a 76-amino-acid chain: Sec-independent protein translocase protein TatA (76 aa).

The chain crosses the membrane as a helical span at residues 1–21 (MGGLSIWHWLIVLLIVALVFG). Residues 40–76 (KDGMKEGETPADAQQLPRTGTVDVNAKETTRSDSNKA) form a disordered region. The span at 64–76 (NAKETTRSDSNKA) shows a compositional bias: basic and acidic residues.

It belongs to the TatA/E family. As to quaternary structure, the Tat system comprises two distinct complexes: a TatABC complex, containing multiple copies of TatA, TatB and TatC subunits, and a separate TatA complex, containing only TatA subunits. Substrates initially bind to the TatABC complex, which probably triggers association of the separate TatA complex to form the active translocon.

Its subcellular location is the cell inner membrane. Functionally, part of the twin-arginine translocation (Tat) system that transports large folded proteins containing a characteristic twin-arginine motif in their signal peptide across membranes. TatA could form the protein-conducting channel of the Tat system. The sequence is that of Sec-independent protein translocase protein TatA from Burkholderia ambifaria (strain MC40-6).